The chain runs to 885 residues: DNA mismatch repair protein MutS (885 aa).

An ATP-binding site is contributed by 626–633; it reads GPNMGGKS.

Belongs to the DNA mismatch repair MutS family.

In terms of biological role, this protein is involved in the repair of mismatches in DNA. It is possible that it carries out the mismatch recognition step. This protein has a weak ATPase activity. This is DNA mismatch repair protein MutS from Burkholderia cenocepacia (strain HI2424).